The sequence spans 447 residues: Dihydroorotase (447 aa).

Residues His84 and His86 each contribute to the Zn(2+) site. Substrate is bound by residues 86-88 and Asn118; that span reads HLR. Asp174, His201, and His255 together coordinate Zn(2+). Position 301 (Asn301) interacts with substrate. Asp328 provides a ligand contact to Zn(2+). Asp328 is a catalytic residue. Substrate contacts are provided by residues His332 and 346–347; that span reads FG.

Belongs to the metallo-dependent hydrolases superfamily. DHOase family. Class I DHOase subfamily. Zn(2+) is required as a cofactor.

It carries out the reaction (S)-dihydroorotate + H2O = N-carbamoyl-L-aspartate + H(+). It functions in the pathway pyrimidine metabolism; UMP biosynthesis via de novo pathway; (S)-dihydroorotate from bicarbonate: step 3/3. In terms of biological role, catalyzes the reversible cyclization of carbamoyl aspartate to dihydroorotate. The protein is Dihydroorotase of Anaplasma phagocytophilum (strain HZ).